Here is a 294-residue protein sequence, read N- to C-terminus: Oligopeptide transport system permease protein OppC (294 aa).

6 consecutive transmembrane segments (helical) span residues 27–47, 94–114, 127–147, 151–171, 202–224, and 260–280; these read MIST…SMFL, IAFA…VITG, FTDF…VTII, NSWS…TRLI, IWPN…NIGL, and WTWV…IFIG. An ABC transmembrane type-1 domain is found at 88-280; it reads ARNSFNIAFA…IVVLAIIFIG (193 aa).

This sequence belongs to the binding-protein-dependent transport system permease family. OppBC subfamily. In terms of assembly, the complex is composed of two ATP-binding proteins (OppD and OppF), two transmembrane proteins (OppB and OppC) and a solute-binding protein (OppA).

The protein resides in the cell membrane. In terms of biological role, part of the ABC transporter complex OppABCDF involved in the uptake of oligopeptides. Probably responsible for the translocation of the substrate across the membrane. This is Oligopeptide transport system permease protein OppC from Lactococcus lactis subsp. cremoris (strain SK11).